The following is a 332-amino-acid chain: L-lactate dehydrogenase A chain (332 aa).

NAD(+) is bound by residues 29–57 (GMVG…MEDK) and R99. Substrate-binding residues include R106, N138, and R169. N138 is an NAD(+) binding site. The active-site Proton acceptor is H193. T248 lines the substrate pocket.

This sequence belongs to the LDH/MDH superfamily. LDH family. As to quaternary structure, homotetramer.

The protein resides in the cytoplasm. The enzyme catalyses (S)-lactate + NAD(+) = pyruvate + NADH + H(+). The protein operates within fermentation; pyruvate fermentation to lactate; (S)-lactate from pyruvate: step 1/1. Functionally, interconverts simultaneously and stereospecifically pyruvate and lactate with concomitant interconversion of NADH and NAD(+). The chain is L-lactate dehydrogenase A chain (ldha) from Fundulus heteroclitus (Killifish).